The sequence spans 438 residues: Battenin (438 aa).

Residues 1-29 form a disordered region; the sequence is MGGCAGSRRRLLDSEEEETAPEPRPPRSY. Over 1–37 the chain is Cytoplasmic; it reads MGGCAGSRRRLLDSEEEETAPEPRPPRSYHKGALWKN. S14 is subject to Phosphoserine. The helical transmembrane segment at 38–58 threads the bilayer; the sequence is VMGFWLLGLCNNFSYVVMLSA. Residues 59–127 lie on the Lumenal side of the membrane; the sequence is AHDILSHQRA…GLHLLPYSPR (69 aa). The segment at 68-89 is disordered; the sequence is ASGNQSHVDPDPPPTAHNSSSR. N71 and N85 each carry an N-linked (GlcNAc...) asparagine glycan. A helical transmembrane segment spans residues 128–148; it reads VLVSGICAAGSFILVAFSHSV. Topologically, residues 149–151 are cytoplasmic; it reads GTS. Residues 152–172 form a helical membrane-spanning segment; it reads LCGVVLASISSGVGEVTFLSL. The Lumenal segment spans residues 173-182; that stretch reads TAFYPRAVIS. Residues 183-203 traverse the membrane as a helical segment; sequence WWSSGTGGAGLMGALSYLGLT. Topologically, residues 204 to 277 are cytoplasmic; sequence QAGLSPQHTL…NLSLQERWTV (74 aa). Residues 236–267 are disordered; sequence PQDPGGEEEAETSARQPLIDSETPESKPDSSS. A Lysosomal targeting motif motif is present at residues 242–244; sequence EEE. The Lysosomal targeting motif. Required for AP1G1, AP2A2 and AP3D1 interaction motif lies at 253-254; that stretch reads LI. The chain crosses the membrane as a helical span at residues 278 to 298; that stretch reads FKGLLWYIVPLVLVYFAEYFI. Topologically, residues 299 to 346 are lumenal; sequence NQGLFELLFFRNTSLNHAQQYRWYQMLYQAGVFVSRSSLHCCRIRFTW. N310 carries an N-linked (GlcNAc...) asparagine glycan. The helical transmembrane segment at 347 to 367 threads the bilayer; that stretch reads VLALLQCLNLAFLLVDVWFSF. Over 368-438 the chain is Cytoplasmic; sequence LPSIYLVFLI…PLHDFLCHLS (71 aa). The Lysosomal targeting motif signature appears at 409–419; that stretch reads MAAACISDTLG. The residue at position 435 (C435) is a Cysteine methyl ester. C435 carries S-farnesyl cysteine lipidation. The propeptide at 436 to 438 is removed in mature form; it reads HLS.

The protein belongs to the battenin family. In terms of assembly, interacts with DCTN1, KIF3A, RAB7A and RILP. Interacts with CLN5. Post-translationally, highly glycosylated. Farnesylation is important for trafficking to lysosomes.

It is found in the lysosome membrane. The protein resides in the late endosome. It localises to the lysosome. Its function is as follows. Mediates microtubule-dependent, anterograde transport connecting the Golgi network, endosomes, autophagosomes, lysosomes and plasma membrane, and participates in several cellular processes such as regulation of lysosomal pH, lysosome protein degradation, receptor-mediated endocytosis, autophagy, transport of proteins and lipids from the TGN, apoptosis and synaptic transmission. Facilitates the proteins transport from trans-Golgi network (TGN)-to other membrane compartments such as transport of microdomain-associated proteins to the plasma membrane, IGF2R transport to the lysosome where it regulates the CTSD release leading to regulation of CTSD maturation and thereby APP intracellular processing. Moreover regulates CTSD activity in response to osmotic stress. Also binds galactosylceramide and transports it from the trans Golgi to the rafts, which may have immediate and downstream effects on cell survival by modulating ceramide synthesis. At the plasma membrane, regulates actin-dependent events including filopodia formation, cell migration, and pinocytosis through ARF1-CDC42 pathway and also the cytoskeleton organization through interaction with MYH10 and fodrin leading to the regulation of the plasma membrane association of Na+, K+ ATPase complex. Regulates synaptic transmission in the amygdala, hippocampus, and cerebellum through regulation of synaptic vesicles density and their proximity to active zones leading to modulation of short-term plasticity and age-dependent anxious behavior, learning and memory. Regulates autophagic vacuoles (AVs) maturation by modulating the trafficking between endocytic and autophagolysosomal/lysosomal compartments, which involves vesicle fusion leading to regulation of degradation process. Also participates in cellular homeostasis of compounds such as, water, ions, amino acids, proteins and lipids in several tissue namely in brain and kidney through regulation of their transport and synthesis. This Canis lupus familiaris (Dog) protein is Battenin.